Consider the following 436-residue polypeptide: D-amino acid dehydrogenase (436 aa).

3 to 17 is a binding site for FAD; it reads IVVLGAGVVGVTSAY.

It belongs to the DadA oxidoreductase family. The cofactor is FAD.

It catalyses the reaction a D-alpha-amino acid + A + H2O = a 2-oxocarboxylate + AH2 + NH4(+). The protein operates within amino-acid degradation; D-alanine degradation; NH(3) and pyruvate from D-alanine: step 1/1. Oxidative deamination of D-amino acids. In Cereibacter sphaeroides (strain ATCC 17023 / DSM 158 / JCM 6121 / CCUG 31486 / LMG 2827 / NBRC 12203 / NCIMB 8253 / ATH 2.4.1.) (Rhodobacter sphaeroides), this protein is D-amino acid dehydrogenase.